The sequence spans 225 residues: UPF0758 protein SO_4248 (225 aa).

Positions 102–224 (VLTNPDLTRD…IVSFAERGWI (123 aa)) constitute an MPN domain. Residues His173, His175, and Asp186 each coordinate Zn(2+). Positions 173 to 186 (HNHPSGIAEPSQAD) match the JAMM motif motif.

This sequence belongs to the UPF0758 family.

This chain is UPF0758 protein SO_4248, found in Shewanella oneidensis (strain ATCC 700550 / JCM 31522 / CIP 106686 / LMG 19005 / NCIMB 14063 / MR-1).